Here is a 572-residue protein sequence, read N- to C-terminus: Myb-like protein Y (572 aa).

Polar residues predominate over residues 196 to 211 (QSQSQLPTATNNNNKQ). The segment at 196-283 (QSQSQLPTAT…NNNNNNNNNE (88 aa)) is disordered. Composition is skewed to low complexity over residues 222 to 237 (TATA…TTTT) and 260 to 281 (NDNN…NNNN). The region spanning 311–360 (PWTVEDQKKLEDALTKYPPSRFSSVSRWQMVSKELGISPKAVALRYNQML) is the Myb-like domain. A disordered region spans residues 367–456 (KPSLQQQQQQ…TTVTPNMTTP (90 aa)). 2 stretches are compositionally biased toward low complexity: residues 371 to 392 (QQQQ…TTTT) and 414 to 425 (SSFSSPSSSSKE). Residues 426–435 (SPNKKEKTTH) are compositionally biased toward basic and acidic residues. A compositionally biased stretch (low complexity) spans 436–455 (DTTTTTNTATTTTVTPNMTT).

The polypeptide is Myb-like protein Y (mybY) (Dictyostelium discoideum (Social amoeba)).